A 345-amino-acid chain; its full sequence is Methionine import ATP-binding protein MetN (345 aa).

Positions 2–241 (IKLKNISKVF…PKTLLAQEFI (240 aa)) constitute an ABC transporter domain. 38–45 (GASGAGKS) serves as a coordination point for ATP.

This sequence belongs to the ABC transporter superfamily. Methionine importer (TC 3.A.1.24) family. As to quaternary structure, the complex is composed of two ATP-binding proteins (MetN), two transmembrane proteins (MetI) and a solute-binding protein (MetQ).

Its subcellular location is the cell inner membrane. The catalysed reaction is L-methionine(out) + ATP + H2O = L-methionine(in) + ADP + phosphate + H(+). It carries out the reaction D-methionine(out) + ATP + H2O = D-methionine(in) + ADP + phosphate + H(+). Functionally, part of the ABC transporter complex MetNIQ involved in methionine import. Responsible for energy coupling to the transport system. In Histophilus somni (strain 129Pt) (Haemophilus somnus), this protein is Methionine import ATP-binding protein MetN.